The following is a 273-amino-acid chain: 2-dehydro-3-deoxyphosphooctonate aldolase (273 aa).

This sequence belongs to the KdsA family.

The protein localises to the cytoplasm. The catalysed reaction is D-arabinose 5-phosphate + phosphoenolpyruvate + H2O = 3-deoxy-alpha-D-manno-2-octulosonate-8-phosphate + phosphate. It participates in carbohydrate biosynthesis; 3-deoxy-D-manno-octulosonate biosynthesis; 3-deoxy-D-manno-octulosonate from D-ribulose 5-phosphate: step 2/3. Its pathway is bacterial outer membrane biogenesis; lipopolysaccharide biosynthesis. The chain is 2-dehydro-3-deoxyphosphooctonate aldolase from Nitratidesulfovibrio vulgaris (strain ATCC 29579 / DSM 644 / CCUG 34227 / NCIMB 8303 / VKM B-1760 / Hildenborough) (Desulfovibrio vulgaris).